The primary structure comprises 396 residues: Endo-1,4-beta-xylanase A (396 aa).

A signal peptide spans 1 to 28; that stretch reads MITLFRKPFVAGLAISLLVGGGIGNVAA. The 346-residue stretch at 51–396 folds into the GH10 domain; that stretch reads AWQVASLSER…VKPAYWRIID (346 aa). Glutamate 195 serves as the catalytic Proton donor. Residue glutamate 301 is the Nucleophile of the active site.

It belongs to the glycosyl hydrolase 10 (cellulase F) family.

Its subcellular location is the secreted. It carries out the reaction Endohydrolysis of (1-&gt;4)-beta-D-xylosidic linkages in xylans.. The protein operates within glycan degradation; xylan degradation. This chain is Endo-1,4-beta-xylanase A (xynA), found in Halalkalibacterium halodurans (strain ATCC BAA-125 / DSM 18197 / FERM 7344 / JCM 9153 / C-125) (Bacillus halodurans).